Here is a 460-residue protein sequence, read N- to C-terminus: Gastric inhibitory polypeptide receptor (460 aa).

Positions 1–18 are cleaved as a signal peptide; sequence MPLRLLLLLLWLWGLQWA. The Extracellular segment spans residues 19-134; sequence ETDSEGQTTT…DQTLILERLQ (116 aa). Disulfide bonds link C42-C66, C57-C99, and C80-C114. N58, N68, and N73 each carry an N-linked (GlcNAc...) asparagine glycan. Residues 135-155 form a helical membrane-spanning segment; sequence IMYTVGYSLSLTTLLLALLIL. The Cytoplasmic portion of the chain corresponds to 156-166; sequence SLFRRLHCTRN. Residues 167-185 form a helical membrane-spanning segment; that stretch reads YIHMNLFTSFMLRAAAILT. Residues 186-222 lie on the Extracellular side of the membrane; the sequence is RDQLLPPLGPYTGDQAPTPWNQALAACRTAQIMTQYC. The helical transmembrane segment at 223-243 threads the bilayer; the sequence is VGANYTWLLVEGVYLHHLLVI. Residues 244–255 lie on the Cytoplasmic side of the membrane; that stretch reads VGRSEKGHFRCY. A helical membrane pass occupies residues 256–276; sequence LLLGWGAPALFVIPWVIVRYL. Topologically, residues 277–297 are extracellular; sequence RENTQCWERNEVKAIWWIIRT. A helical membrane pass occupies residues 298-318; it reads PILITILINFLIFIRILGILV. The Cytoplasmic portion of the chain corresponds to 319-337; sequence SKLRTRQMRCPDYRLRLAR. The chain crosses the membrane as a helical span at residues 338 to 358; that stretch reads STLTLVPLLGVHEVVFAPVTE. At 359–370 the chain is on the extracellular side; it reads EQVEGSLRFAKL. A helical transmembrane segment spans residues 371 to 391; the sequence is AFEIFLSSFQGFLVSVLYCFI. Over 392–460 the chain is Cytoplasmic; it reads NKEVQSEIRQ…PGDEVLESYC (69 aa).

It belongs to the G-protein coupled receptor 2 family. In terms of assembly, may form homodimers and heterodimers with GLP1R. In terms of processing, N-glycosylation is required for cell surface expression and lengthens receptor half-life by preventing degradation in the ER.

It localises to the cell membrane. Functionally, this is a receptor for GIP. The activity of this receptor is mediated by G proteins which activate adenylyl cyclase. This Mus musculus (Mouse) protein is Gastric inhibitory polypeptide receptor (Gipr).